A 153-amino-acid polypeptide reads, in one-letter code: Troponin C (153 aa).

Residue Ala-1 is modified to Blocked amino end (Ala). 4 EF-hand domains span residues 10–45 (EQVQ…LGQT), 46–81 (FEEK…FLVE), 86–121 (AMQE…LDDK), and 122–153 (LTED…MMTG). Ca(2+)-binding residues include Asp-59, Asp-61, Ser-63, Glu-65, Glu-70, Asp-99, Asp-110, Asp-135, Asp-137, Ser-139, Thr-141, and Glu-146.

It belongs to the troponin C family.

Its function is as follows. Troponin is the central regulatory protein of striated muscle contraction. Tn consists of three components: Tn-I which is the inhibitor of actomyosin ATPase, Tn-T which contains the binding site for tropomyosin and Tn-C. The binding of calcium to Tn-C abolishes the inhibitory action of Tn on actin filaments. The protein is Troponin C of Tachypleus tridentatus (Japanese horseshoe crab).